A 334-amino-acid polypeptide reads, in one-letter code: Replication factor C subunit 4 (334 aa).

55-62 (GPPGTGKT) is an ATP binding site.

It belongs to the activator 1 small subunits family. Heteropentamer of various rfc subunits that forms a complex (RFC) with PCNA in the presence of ATP.

Its subcellular location is the nucleus. In terms of biological role, the elongation of primed DNA templates by DNA polymerase delta and epsilon requires the action of the accessory proteins PCNA and activator 1. This subunit may be involved in the elongation of the multiprimed DNA template. The sequence is that of Replication factor C subunit 4 (rfc-4) from Caenorhabditis elegans.